Here is a 369-residue protein sequence, read N- to C-terminus: Anhydro-N-acetylmuramic acid kinase (369 aa).

ATP is bound at residue 12-19 (GTSMDGVD).

This sequence belongs to the anhydro-N-acetylmuramic acid kinase family.

The catalysed reaction is 1,6-anhydro-N-acetyl-beta-muramate + ATP + H2O = N-acetyl-D-muramate 6-phosphate + ADP + H(+). It participates in amino-sugar metabolism; 1,6-anhydro-N-acetylmuramate degradation. It functions in the pathway cell wall biogenesis; peptidoglycan recycling. Catalyzes the specific phosphorylation of 1,6-anhydro-N-acetylmuramic acid (anhMurNAc) with the simultaneous cleavage of the 1,6-anhydro ring, generating MurNAc-6-P. Is required for the utilization of anhMurNAc either imported from the medium or derived from its own cell wall murein, and thus plays a role in cell wall recycling. The polypeptide is Anhydro-N-acetylmuramic acid kinase (Shewanella sp. (strain W3-18-1)).